The chain runs to 244 residues: Ferredoxin--NADP reductase B (244 aa).

One can recognise an FAD-binding FR-type domain in the interval 4–106; the sequence is AEPFEARLVA…VGPHGLFTRD (103 aa). Residues 55–58 and T120 each bind FAD; that span reads RAYS.

It belongs to the ferredoxin--NADP reductase type 1 family. It depends on FAD as a cofactor.

It catalyses the reaction 2 reduced [4Fe-4S]-[ferredoxin] + NADP(+) + H(+) = 2 oxidized [4Fe-4S]-[ferredoxin] + NADPH. In terms of biological role, transports electrons between NADPH and ferredoxin. Can transfer electrons to ferredoxins Fdx2 and Fdx8. Prefers NADPH to NADH. The protein is Ferredoxin--NADP reductase B of Sorangium cellulosum (strain So ce56) (Polyangium cellulosum (strain So ce56)).